A 299-amino-acid polypeptide reads, in one-letter code: ATP phosphoribosyltransferase (299 aa).

It belongs to the ATP phosphoribosyltransferase family. Long subfamily. Mg(2+) is required as a cofactor.

It is found in the cytoplasm. The catalysed reaction is 1-(5-phospho-beta-D-ribosyl)-ATP + diphosphate = 5-phospho-alpha-D-ribose 1-diphosphate + ATP. Its pathway is amino-acid biosynthesis; L-histidine biosynthesis; L-histidine from 5-phospho-alpha-D-ribose 1-diphosphate: step 1/9. Feedback inhibited by histidine. Functionally, catalyzes the condensation of ATP and 5-phosphoribose 1-diphosphate to form N'-(5'-phosphoribosyl)-ATP (PR-ATP). Has a crucial role in the pathway because the rate of histidine biosynthesis seems to be controlled primarily by regulation of HisG enzymatic activity. This Shewanella sediminis (strain HAW-EB3) protein is ATP phosphoribosyltransferase.